Consider the following 37-residue polypeptide: Large ribosomal subunit protein bL36 (37 aa).

Belongs to the bacterial ribosomal protein bL36 family.

This Mycobacterium ulcerans (strain Agy99) protein is Large ribosomal subunit protein bL36.